The chain runs to 1349 residues: ABC multidrug transporter G (1349 aa).

The 249-residue stretch at 51-299 (RQFLGFLKGS…FEDMGFVCPK (249 aa)) folds into the ABC transporter 1 domain. The N-linked (GlcNAc...) asparagine glycan is linked to Asn144. The next 4 membrane-spanning stretches (helical) occupy residues 407 to 427 (LSLI…GSLF), 436 to 456 (SIFL…LESM), 492 to 512 (IPVV…MAAL), and 523 to 543 (WIIV…VGAL). Residue Asn549 is glycosylated (N-linked (GlcNAc...) asparagine). 2 consecutive transmembrane segments (helical) span residues 550–570 (ASKI…YLIP) and 580–600 (WIFY…NEFV). Residue Asn649 is glycosylated (N-linked (GlcNAc...) asparagine). The helical transmembrane segment at 659 to 679 (FGVIIGFWVFFIVLTALGLEL) threads the bilayer. The region spanning 721-963 (FTWHDLDYHV…VLDYFARHGA (243 aa)) is the ABC transporter 2 domain. ATP is bound at residue 757–764 (GCSGAGKT). N-linked (GlcNAc...) asparagine glycosylation occurs at Asn994. Helical transmembrane passes span 1056 to 1076 (VILH…IGDG), 1085 to 1105 (FAIF…QPFF), 1121 to 1143 (IYHW…ILCA), 1166 to 1186 (MYLQ…GIAA), 1193 to 1213 (FAAV…CGVV), and 1226 to 1246 (WLYY…EVLW). An N-linked (GlcNAc...) asparagine glycan is attached at Asn1287. Residues 1318-1338 (TGITALFCVSSYAMVFLMMKL) form a helical membrane-spanning segment.

This sequence belongs to the ABC transporter superfamily. ABCG family. PDR (TC 3.A.1.205) subfamily.

The protein localises to the cell membrane. Its function is as follows. ABC efflux transporter that seems not to be able to transport azoles, nor rhodamine 6G (R-6G), a known substrate for many ABC transporters. This Aspergillus fumigatus (strain ATCC MYA-4609 / CBS 101355 / FGSC A1100 / Af293) (Neosartorya fumigata) protein is ABC multidrug transporter G.